The sequence spans 362 residues: Heat-inducible transcription repressor HrcA (362 aa).

Belongs to the HrcA family.

In terms of biological role, negative regulator of class I heat shock genes (grpE-dnaK-dnaJ and groELS operons). Prevents heat-shock induction of these operons. The sequence is that of Heat-inducible transcription repressor HrcA from Nitrobacter hamburgensis (strain DSM 10229 / NCIMB 13809 / X14).